The chain runs to 404 residues: Deoxyguanosinetriphosphate triphosphohydrolase-like protein 1 (404 aa).

The HD domain occupies 75 to 219; sequence RLTHSIEVAQ…AAIADDIAYN (145 aa).

The protein belongs to the dGTPase family. Type 2 subfamily.

The sequence is that of Deoxyguanosinetriphosphate triphosphohydrolase-like protein 1 from Mesorhizobium japonicum (strain LMG 29417 / CECT 9101 / MAFF 303099) (Mesorhizobium loti (strain MAFF 303099)).